Here is a 476-residue protein sequence, read N- to C-terminus: Lactate utilization protein B (476 aa).

2 consecutive 4Fe-4S ferredoxin-type domains span residues 304–334 and 353–382; these read GGEF…GHTY and YDDF…LHQL. [4Fe-4S] cluster contacts are provided by cysteine 313, cysteine 316, cysteine 319, cysteine 323, cysteine 366, cysteine 369, and cysteine 373. Residues 452-476 form a disordered region; sequence RDFPAPNKNSFRNWMKHRTKGDEES.

This sequence belongs to the LutB/YkgF family.

Is involved in L-lactate degradation and allows cells to grow with lactate as the sole carbon source. Has probably a role as an electron transporter during oxidation of L-lactate. The chain is Lactate utilization protein B from Lysinibacillus sphaericus (strain C3-41).